A 326-amino-acid chain; its full sequence is Prenyl transferase nodC (326 aa).

Residues 8-28 traverse the membrane as a helical segment; it reads LAAVLFSALFSLGVILVHLPW. Isopentenyl diphosphate is bound at residue H95. Mg(2+)-binding residues include D102 and D106. Position 111 (R111) interacts with dimethylallyl diphosphate. Residue N139 is glycosylated (N-linked (GlcNAc...) asparagine). Position 195 (K195) interacts with dimethylallyl diphosphate. N-linked (GlcNAc...) asparagine glycosylation is present at N210.

It belongs to the FPP/GGPP synthase family.

It localises to the membrane. The protein operates within secondary metabolite biosynthesis. Cytochrome P450 monooxygenase; part of the gene cluster that mediates the biosynthesis of the indole diterpenes nodulisporic acids (NA). Nodulisporic acid A (NAA) and its chemically modified derivatives are of particular significance because of their highly potent insecticidal activity against blood-feeding arthropods and lack of observable adverse effects on mammals, in particular the tremogenicity associated with the paspaline-derived IDTs is not observed. The geranylgeranyl diphosphate (GGPP) synthase ggs1, localized outside of the cluster, is proposed to catalyze the first step in nodulisporic acid biosynthesis via conversion of farnesyl pyrophosphate and isopentyl pyrophosphate into geranylgeranyl pyrophosphate (GGPP). Condensation of indole-3-glycerol phosphate with GGPP by the prenyl transferase nodC then forms 3-geranylgeranylindole (3-GGI). Epoxidation by the FAD-dependent monooxygenase nodM leads to a single-epoxidized-GGI that is substrate of the terpene cyclase nodB for cyclization to yield emindole SB. The terminal methyl carbon, C28, of emindole SB is then oxidized by the cytochrome P450 monooxygenase nodW to produce nodulisporic acid F (NAF), the pentacyclic core of NAA. NAF is converted to nodulisporic acid E (NAE) via prenylation. This step is probably performed by one of the indole diterpene prenyltransferases nodD1 or nodD2. Several oxidation steps performed by the FAD-linked oxidoreductase nodO and one of the cytochrome P450 monooxygenase nodR, nodX or nodZ further convert NAE to nodulisporic acid D (NAD). NAD is substrate of cytochrome P450 monooxygenase nodJ to produce the precursor of nodulisporic acid C (NAC), converted to NAC by one of the indole diterpene prenyltransferases nodD1 or nodD2. The FAD-dependent monooxygenase nodY2 then oxidizes NAC to nodulisporic acid B (NAB). Finally NAB is converted to NAA by one of the cytochrome P450 monooxygenases nodR, nodX or nodZ. The protein is Prenyl transferase nodC of Hypoxylon pulicicidum.